Here is a 58-residue protein sequence, read N- to C-terminus: Small ribosomal subunit protein bS21 (58 aa).

The tract at residues 39–58 is disordered; that stretch reads DKPSVKKRAKSKAAAKYRSR. Over residues 43-58 the composition is skewed to basic residues; it reads VKKRAKSKAAAKYRSR.

It belongs to the bacterial ribosomal protein bS21 family.

The sequence is that of Small ribosomal subunit protein bS21 (rpsU) from Chlamydia pneumoniae (Chlamydophila pneumoniae).